A 1413-amino-acid polypeptide reads, in one-letter code: Zinc finger SWIM domain-containing protein 8 (1413 aa).

Phosphoserine occurs at positions 36, 48, and 53. Positions 45 to 65 (RKQSAGPNSPTGGGGGGGSGG) are disordered. Residues 55–65 (TGGGGGGGSGG) are compositionally biased toward gly residues. An SWIM-type zinc finger spans residues 172-208 (YNVAVMFDRCRVTSCSCTCGAGAKWCTHVVALCLFRI). The segment at 600–817 (ESQTHKPQTL…ESHAPHVPNQ (218 aa)) is disordered. Over residues 604–625 (HKPQTLSSFYSSSRPATASQRS) the composition is skewed to polar residues. Over residues 704–715 (SRGGYNGRGWGS) the composition is skewed to gly residues. Thr724 carries the phosphothreonine modification. A compositionally biased stretch (polar residues) spans 729-744 (IDSSAPETTSDSSPTL). Residues Ser738, Ser741, and Ser745 each carry the phosphoserine modification. Residues 759–794 (GRGQDSDSISSSSSDSLGSSSSSGSRRASASGGARA) are compositionally biased toward low complexity. Basic and acidic residues predominate over residues 795-811 (KTVEVGRYKGRRPESHA). Phosphoserine occurs at positions 852 and 1412.

This sequence belongs to the ZSWIM8 family. Component of the SCF-like E3 ubiquitin-protein ligase complex which contains CUL3, RBX1, ELOB, ELOC and ZSWIM8. Interacts with DAB1.

It localises to the cytoplasm. Its subcellular location is the cytosol. The protein operates within protein modification; protein ubiquitination. Functionally, substrate recognition component of a SCF-like E3 ubiquitin-protein ligase complex that promotes target-directed microRNA degradation (TDMD), a process that mediates degradation of microRNAs (miRNAs). The SCF-like E3 ubiquitin-protein ligase complex acts by catalyzing ubiquitination and subsequent degradation of AGO proteins (AGO1, AGO2, AGO3 and/or AGO4), thereby exposing miRNAs for degradation. Specifically recognizes and binds AGO proteins when they are engaged with a TDMD target. May also acts as a regulator of axon guidance: specifically recognizes misfolded ROBO3 and promotes its ubiquitination and subsequent degradation. Plays an essential role for proper embryonic development of heart and lung. Controls protein quality of DAB1, a key signal molecule for brain development, thus protecting its signaling strength. Mechanistically, recognizes intrinsically disordered regions of DAB1 and eliminates misfolded DAB1 that cannot be properly phosphorylated. The chain is Zinc finger SWIM domain-containing protein 8 from Bos taurus (Bovine).